A 260-amino-acid chain; its full sequence is Adenosylcobinamide-GDP ribazoletransferase (260 aa).

Helical transmembrane passes span Pro42–Ile62, Leu64–Leu84, Phe117–Ile137, Tyr144–Trp164, Gly192–Ile212, Ala214–Gly234, and Thr240–Leu260.

The protein belongs to the CobS family. The cofactor is Mg(2+).

It is found in the cell inner membrane. The catalysed reaction is alpha-ribazole + adenosylcob(III)inamide-GDP = adenosylcob(III)alamin + GMP + H(+). It carries out the reaction alpha-ribazole 5'-phosphate + adenosylcob(III)inamide-GDP = adenosylcob(III)alamin 5'-phosphate + GMP + H(+). Its pathway is cofactor biosynthesis; adenosylcobalamin biosynthesis; adenosylcobalamin from cob(II)yrinate a,c-diamide: step 7/7. Joins adenosylcobinamide-GDP and alpha-ribazole to generate adenosylcobalamin (Ado-cobalamin). Also synthesizes adenosylcobalamin 5'-phosphate from adenosylcobinamide-GDP and alpha-ribazole 5'-phosphate. In Brucella abortus (strain S19), this protein is Adenosylcobinamide-GDP ribazoletransferase.